A 986-amino-acid polypeptide reads, in one-letter code: DNA polymerase I (986 aa).

The 303-residue stretch at 1 to 303 (MFMSAKSPLL…RTFIDKIQAF (303 aa)) folds into the 5'-3' exonuclease domain. Residues 304–592 (HRNFSDNQSP…MEDRGIRIDC (289 aa)) enclose the 3'-5' exonuclease domain. The interval 308 to 327 (SDNQSPVPMGNEADNGEPKK) is disordered. Positions 593–986 (DYLQTLSQQL…HRGSNWMEAK (394 aa)) are polymerase.

The protein belongs to the DNA polymerase type-A family. In terms of assembly, single-chain monomer with multiple functions.

It catalyses the reaction DNA(n) + a 2'-deoxyribonucleoside 5'-triphosphate = DNA(n+1) + diphosphate. In addition to polymerase activity, this DNA polymerase exhibits 3'-5' and 5'-3' exonuclease activity. This chain is DNA polymerase I (polA), found in Synechocystis sp. (strain ATCC 27184 / PCC 6803 / Kazusa).